The primary structure comprises 100 residues: Urease subunit gamma (100 aa).

The protein belongs to the urease gamma subunit family. Heterotrimer of UreA (gamma), UreB (beta) and UreC (alpha) subunits. Three heterotrimers associate to form the active enzyme.

The protein localises to the cytoplasm. The catalysed reaction is urea + 2 H2O + H(+) = hydrogencarbonate + 2 NH4(+). Its pathway is nitrogen metabolism; urea degradation; CO(2) and NH(3) from urea (urease route): step 1/1. This is Urease subunit gamma from Corynebacterium glutamicum (strain R).